A 310-amino-acid chain; its full sequence is Apolipoprotein E (310 aa).

The N-terminal stretch at 1-18 (MKVLWAALVVTLLAGCQA) is a signal peptide. 4 repeat units span residues 77–98 (ALME…QQLG), 99–120 (PTAQ…ARLG), 121–142 (ADME…AMMG), and 143–164 (QSTE…KRLL). Residues 77–248 (ALMEETMKEV…RLDEVREQVQ (172 aa)) form an 8 X 22 AA approximate tandem repeats region. Methionine 140 bears the Methionine sulfoxide mark. Residue serine 144 is modified to Phosphoserine. The tract at residues 155–165 (HLRKLRKRLLR) is LDL and other lipoprotein receptors binding. 159–162 (LRKR) lines the heparin pocket. Residues 165–186 (RDAEDLQKRLAVYQAGIREGAE) constitute a repeat. Tandem repeats lie at residues 187–204 (RSVN…EQAA), 205–226 (TVRS…QRLR), and 227–248 (GRLE…EQVQ). Residues 203–283 (AATVRSLISK…SWFEPLVQDM (81 aa)) form a lipid-binding and lipoprotein association region. Heparin is bound at residue 222–229 (GQRLRGRL). A homooligomerization region spans residues 259 to 310 (NQMRLQAEAFHARLKSWFEPLVQDMQQKWAELVEKVQLAVGTSPTSESSEKQ). Residues 271–283 (RLKSWFEPLVQDM) form a specificity for association with VLDL region.

Belongs to the apolipoprotein A1/A4/E family. In terms of assembly, homotetramer. May interact with ABCA1; functionally associated with ABCA1 in the biogenesis of HDLs. May interact with APP/A4 amyloid-beta peptide; the interaction is extremely stable in vitro but its physiological significance is unclear. May interact with MAPT. May interact with MAP2. In the cerebrospinal fluid, interacts with secreted SORL1. Interacts with PMEL; this allows the loading of PMEL luminal fragment on ILVs to induce fibril nucleation. APOE exists as multiple glycosylated and sialylated glycoforms within cells and in plasma. The extent of glycosylation and sialylation are tissue and context specific. Post-translationally, glycated in plasma VLDL. In terms of processing, phosphorylated by FAM20C in the extracellular medium.

It localises to the secreted. The protein localises to the extracellular space. Its subcellular location is the extracellular matrix. It is found in the extracellular vesicle. The protein resides in the endosome. It localises to the multivesicular body. Its function is as follows. APOE is an apolipoprotein, a protein associating with lipid particles, that mainly functions in lipoprotein-mediated lipid transport between organs via the plasma and interstitial fluids. APOE is a core component of plasma lipoproteins and is involved in their production, conversion and clearance. Apolipoproteins are amphipathic molecules that interact both with lipids of the lipoprotein particle core and the aqueous environment of the plasma. As such, APOE associates with chylomicrons, chylomicron remnants, very low density lipoproteins (VLDL) and intermediate density lipoproteins (IDL) but shows a preferential binding to high-density lipoproteins (HDL). It also binds a wide range of cellular receptors including the LDL receptor/LDLR, the LDL receptor-related proteins LRP1, LRP2 and LRP8 and the very low-density lipoprotein receptor/VLDLR that mediate the cellular uptake of the APOE-containing lipoprotein particles. Finally, APOE also has a heparin-binding activity and binds heparan-sulfate proteoglycans on the surface of cells, a property that supports the capture and the receptor-mediated uptake of APOE-containing lipoproteins by cells. A main function of APOE is to mediate lipoprotein clearance through the uptake of chylomicrons, VLDLs, and HDLs by hepatocytes. APOE is also involved in the biosynthesis by the liver of VLDLs as well as their uptake by peripheral tissues ensuring the delivery of triglycerides and energy storage in muscle, heart and adipose tissues. By participating in the lipoprotein-mediated distribution of lipids among tissues, APOE plays a critical role in plasma and tissues lipid homeostasis. APOE is also involved in two steps of reverse cholesterol transport, the HDLs-mediated transport of cholesterol from peripheral tissues to the liver, and thereby plays an important role in cholesterol homeostasis. First, it is functionally associated with ABCA1 in the biogenesis of HDLs in tissues. Second, it is enriched in circulating HDLs and mediates their uptake by hepatocytes. APOE also plays an important role in lipid transport in the central nervous system, regulating neuron survival and sprouting. The chain is Apolipoprotein E (APOE) from Tapirus terrestris (Lowland tapir).